Consider the following 725-residue polypeptide: MWSSVANLKENLNKIAHDVHDDDEDDDEDLTIYGSTNGGTDRRNSNGFRYSRSPMANGFESPVNPEIERYKAEINKLQKSESEIKALSVNYAALLKEKEDQISRLNQENGSLKQNLTSTNAALKESRLDLSRASNNNAIKGNGDHSPNRSQRSPTNWKNRNQMNNGIASKPNGTENDSESHKKEKEFAEMLEERTRSMASAQARELEKEREKSANLQILLQEERKQNETFKEELQSLRLDKEKTLMESNKVRRELDAKLAEIRQLQMKLNGGEQHAFGISRENLKEVNKALEKENNELKLKRSELEAALEASQKSTSRKLFPKSTEDLSRHLSSLDEEKAGTFPGKEDMEKSLQRLEKELEEARREKDKARQELKRLKQHLLEKETEESEKMDEDSRLIDELRQTNEYQRSQILGLEKALRQTMANQEEIKSSSDLEIRKSKGIIEDLNQKLANCLRTIDSKNVELLNLQTALGQYYAEIEAKEHFERELAVAKEDAMKLSARLKDVDEQLESSKKEKEEITSKVLHAENIAAEWKNRVSKVEDDNAKVRRVLEQSMTRLNRMSMDSDFLVDRRIVIKLLVTYFQRNHSREVLDLMVRMLGFSEEEKQRIGLAQQGAAGKGVVRGVLGFPGRLVGGILGGGGGSPDSHPNMASDNQSFADMWVEFLLKDAEERERREAEDAANKEQEKATVSSTQRPKYEQSDSEFSTVPLTSSNSNHRLSRLLT.

The segment at 17-62 (HDVHDDDEDDDEDLTIYGSTNGGTDRRNSNGFRYSRSPMANGFESP) is disordered. Residues 21 to 30 (DDDEDDDEDL) are compositionally biased toward acidic residues. A coiled-coil region spans residues 66–132 (EIERYKAEIN…LKESRLDLSR (67 aa)). Disordered stretches follow at residues 134 to 183 (SNNN…SHKK), 191 to 210 (LEER…EKER), and 311 to 349 (ASQK…KEDM). The span at 148–175 (NRSQRSPTNWKNRNQMNNGIASKPNGTE) shows a compositional bias: polar residues. Coiled-coil stretches lie at residues 191–316 (LEER…QKST), 344–407 (PGKE…QTNE), and 437–563 (EIRK…LNRM). The segment covering 324–349 (STEDLSRHLSSLDEEKAGTFPGKEDM) has biased composition (basic and acidic residues). The GRIP domain maps to 562 to 613 (RMSMDSDFLVDRRIVIKLLVTYFQRNHSREVLDLMVRMLGFSEEEKQRIGLA). The span at 672-688 (ERERREAEDAANKEQEK) shows a compositional bias: basic and acidic residues. The tract at residues 672 to 725 (ERERREAEDAANKEQEKATVSSTQRPKYEQSDSEFSTVPLTSSNSNHRLSRLLT) is disordered. Residues 711–725 (LTSSNSNHRLSRLLT) are compositionally biased toward low complexity.

It is found in the golgi apparatus. Golgi matrix protein playing a role in tethering of vesicles to Golgi membranes and in maintaining the overall structure of the Golgi apparatus. This Arabidopsis thaliana (Mouse-ear cress) protein is Golgin candidate 4 (GC4).